The sequence spans 143 residues: Anti-sigma F factor (143 aa).

This sequence belongs to the anti-sigma-factor family.

It carries out the reaction L-seryl-[protein] + ATP = O-phospho-L-seryl-[protein] + ADP + H(+). It catalyses the reaction L-threonyl-[protein] + ATP = O-phospho-L-threonyl-[protein] + ADP + H(+). Binds to sigma F and blocks its ability to form an RNA polymerase holoenzyme (E-sigma F). Phosphorylates SpoIIAA on a serine residue. This phosphorylation may enable SpoIIAA to act as an anti-anti-sigma factor that counteracts SpoIIAB and thus releases sigma F from inhibition. The chain is Anti-sigma F factor from Clostridium beijerinckii (strain ATCC 51743 / NCIMB 8052) (Clostridium acetobutylicum).